The chain runs to 1111 residues: Zinc finger protein GLI1 (1111 aa).

A disordered region spans residues 52–78 (GYGAARETSSCTEGSLFPPPPPPRSSV). An interaction with SUFU region spans residues 123–127 (SYGHL). 5 consecutive C2H2-type zinc fingers follow at residues 238-263 (TDCR…NSEH), 271-298 (FVCH…MRRH), 304-328 (HKCT…LRSH), 334-359 (YMCE…NRTH), and 365-390 (YVCK…KTVH). The segment at 286-294 (KAQYMLVVH) is interaction with DNA. Interaction with DNA stretches follow at residues 348–353 (ASDRAK) and 378–384 (DPSSLRK). Residues 378-487 (DPSSLRKHVK…EDLSSLDEGP (110 aa)) form a disordered region. Basic and acidic residues predominate over residues 416 to 431 (EPKREREGGSGREESR). Positions 439–465 (MPQQSPGAQSSCSSDHSPAGSAANTDS) are enriched in polar residues. Residue Lys-520 is modified to N6-acetyllysine. Disordered stretches follow at residues 528 to 583 (GAPV…LPGL), 598 to 649 (ARGS…RAAD), 673 to 692 (TGRN…QPPS), and 832 to 891 (PCLN…SSHS). Residues 546–562 (SSSSSMSSAYTVSRRSS) are compositionally biased toward low complexity. Positions 640 to 649 (RASDPARAAD) are enriched in basic and acidic residues. The segment covering 855-870 (LPQPQYPQSGPYPQPP) has biased composition (pro residues). Residue Lys-1008 forms a Glycyl lysine isopeptide (Lys-Gly) (interchain with G-Cter in SUMO2) linkage. Residues 1064-1093 (LSPPLSHEQGDSSKNTPSPSGPPNMAVGNM) are disordered.

This sequence belongs to the GLI C2H2-type zinc-finger protein family. Interacts with KIF7. Interacts with STK36. Interacts with ZIC1; the interaction enhances transcription activation. Interacts with SUFU; this inhibits transcriptional activation by GLI1. In terms of processing, phosphorylated in vitro by ULK3. Acetylation at Lys-520 down-regulates transcriptional activity. Deacetylated by HDAC1. Post-translationally, ubiquitinated by the CRL2(FEM1B) complex, suppressing GLI1 transcriptional activator activity.

Its subcellular location is the cytoplasm. The protein localises to the nucleus. Functionally, acts as a transcriptional activator. Binds to the DNA consensus sequence 5'-GACCACCCA-3'. Regulates the transcription of specific genes during normal development. Plays a role in craniofacial development and digital development, as well as development of the central nervous system and gastrointestinal tract. Mediates SHH signaling. Plays a role in cell proliferation and differentiation via its role in SHH signaling. The protein is Zinc finger protein GLI1 (Gli1) of Mus musculus (Mouse).